A 402-amino-acid chain; its full sequence is Putative epoxide hydrolase AFT8 (402 aa).

The protein belongs to the peptidase S33 family.

The protein operates within mycotoxin biosynthesis. In terms of biological role, putative epoxide hydrolase; part of the gene clusters that mediate the biosynthesis of the host-selective toxins (HSTs) AF-toxins responsible for Alternaria black spot of strawberry disease by the strawberry pathotype. AF-toxin I and III are valine derivatives of 2,3-dyhydroxy-isovaleric acid and 2-hydroxy-isovaleric acid respectively, while AF II is an isoleucine derivative of 2-hydroxy-valeric acid. These derivatives are bound to a 9,10-epoxy-8-hydroxy-9-methyl-decatrienoic acid (EDA) moiety. On cellular level, AF-toxins affect plasma membrane of susceptible cells and cause a sudden increase in loss of K(+) after a few minutes of toxin treatment. The aldo-keto reductase AFTS1 catalyzes the conversion of 2-keto-isovaleric acid (2-KIV) to 2-hydroxy-isovaleric acid (2-HIV) by reduction of its ketone to an alcohol. The acyl-CoA ligase AFT1, the hydrolase AFT2 and the enoyl-CoA hydratases AFT3 and AFT6, but also the polyketide synthase AFT9, the acyl-CoA dehydrogenase AFT10, the cytochrome P450 monooxygenase AFT11 and the oxidoreductase AFT12 are all involved in the biosynthesis of the AK-, AF- and ACT-toxin common EDA structural moiety. The exact function of each enzyme, and of additional enzymes identified within the AF-toxin clusters have still to be determined. The sequence is that of Putative epoxide hydrolase AFT8 from Alternaria alternata (Alternaria rot fungus).